Reading from the N-terminus, the 689-residue chain is Probable E3 ubiquitin ligase complex SCF subunit sconB (689 aa).

2 stretches are compositionally biased toward basic and acidic residues: residues 1–12 (MDAHELSFRDGH) and 19–29 (MKDECASEEKA). The segment at 1 to 66 (MDAHELSFRD…STQDKPHSFN (66 aa)) is disordered. The region spanning 186 to 232 (IDFLTALPPEISFKILCYLDTTSLCKAAQVSRRWRALADDDVVWHRM) is the F-box domain. Residues 267–306 (AATWDVSEQPAETESNSATIDTAASGSKRKPESDKEDTAM) are disordered. A compositionally biased stretch (polar residues) spans 276–291 (PAETESNSATIDTAAS). Positions 295-306 (RKPESDKEDTAM) are enriched in basic and acidic residues. WD repeat units follow at residues 358-395 (GHSN…ELRT), 398-437 (GHRS…STYS), 439-475 (HRGG…TCLL), 477-518 (GHTD…RTFH), 572-615 (DTPS…CLRT), 616-655 (FFGH…CERT), and 658-689 (GHSG…SFQT).

This sequence belongs to the WD repeat MET30/SCONB/SCON-2 family. In terms of assembly, component of the SCF(sconB) E3 ubiquitin ligase complex.

It participates in protein modification; protein ubiquitination. Its function is as follows. Component of the SCF(sconB) E3 ubiquitin ligase complex involved in the regulation of sulfur metabolite repression, probably by mediating the inactivation or degradation of the metR transcription factor. This Neosartorya fischeri (strain ATCC 1020 / DSM 3700 / CBS 544.65 / FGSC A1164 / JCM 1740 / NRRL 181 / WB 181) (Aspergillus fischerianus) protein is Probable E3 ubiquitin ligase complex SCF subunit sconB (sconB).